Here is a 571-residue protein sequence, read N- to C-terminus: Glutamine--tRNA ligase (571 aa).

The 'HIGH' region signature appears at 35-45; sequence PEPNGYLHIGH. ATP-binding positions include 36-38 and 42-48; these read EPN and HIGHAKS. 2 residues coordinate L-glutamine: aspartate 68 and tyrosine 213. ATP is bound by residues threonine 232, 262-263, and 270-272; these read RL and LSK. The short motif at 269–273 is the 'KMSKS' region element; the sequence is ILSKR.

Belongs to the class-I aminoacyl-tRNA synthetase family. Monomer.

The protein localises to the cytoplasm. The catalysed reaction is tRNA(Gln) + L-glutamine + ATP = L-glutaminyl-tRNA(Gln) + AMP + diphosphate. This Buchnera aphidicola subsp. Acyrthosiphon pisum (strain APS) (Acyrthosiphon pisum symbiotic bacterium) protein is Glutamine--tRNA ligase.